Consider the following 505-residue polypeptide: DNA primase DnaG (505 aa).

A Toprim domain is found at 167-241 (DAVIVVEGRA…DVDYVAFAPP (75 aa)). 3 residues coordinate Mg(2+): Glu-173, Asp-215, and Asp-217. Residues 268-410 (DEPNLREAAT…PLDNEPRSIE (143 aa)) are disordered. A compositionally biased stretch (low complexity) spans 318–327 (AGVVAGGARS). Acidic residues-rich tracts occupy residues 349–376 (GEVD…DAEF) and 384–402 (PNLD…DAPL).

It belongs to the archaeal DnaG primase family. In terms of assembly, forms a ternary complex with MCM helicase and DNA. The cofactor is Mg(2+).

The enzyme catalyses ssDNA + n NTP = ssDNA/pppN(pN)n-1 hybrid + (n-1) diphosphate.. In terms of biological role, RNA polymerase that catalyzes the synthesis of short RNA molecules used as primers for DNA polymerase during DNA replication. The protein is DNA primase DnaG of Halorubrum lacusprofundi (strain ATCC 49239 / DSM 5036 / JCM 8891 / ACAM 34).